The sequence spans 328 residues: tRNA uridine(34) hydroxylase (328 aa).

Positions 130 to 224 constitute a Rhodanese domain; it reads LDEDTVVLDT…YGKDPEVQGE (95 aa). Cysteine 184 (cysteine persulfide intermediate) is an active-site residue.

It belongs to the TrhO family.

The catalysed reaction is uridine(34) in tRNA + AH2 + O2 = 5-hydroxyuridine(34) in tRNA + A + H2O. In terms of biological role, catalyzes oxygen-dependent 5-hydroxyuridine (ho5U) modification at position 34 in tRNAs. This chain is tRNA uridine(34) hydroxylase, found in Streptococcus pyogenes serotype M12 (strain MGAS2096).